Consider the following 231-residue polypeptide: uncharacterized protein (231 aa).

10-34 provides a ligand contact to NADP(+); that stretch reads VVTGAGSGIGEAIATLLHEEGAKVV. Ser-140 serves as a coordination point for substrate. The active-site Proton acceptor is the Tyr-153.

Belongs to the short-chain dehydrogenases/reductases (SDR) family.

This is an uncharacterized protein from Staphylococcus aureus (strain COL).